Here is a 222-residue protein sequence, read N- to C-terminus: uncharacterized protein (222 aa).

Positions serine 43–isoleucine 73 form a coiled coil.

This is an uncharacterized protein from Rickettsia conorii (strain ATCC VR-613 / Malish 7).